The chain runs to 71 residues: Prokaryotic ubiquitin-like protein Pup (71 aa).

The span at 1 to 18 (MPEKDTGGQHRATRRTEE) shows a compositional bias: basic and acidic residues. The tract at residues 1–36 (MPEKDTGGQHRATRRTEEHDETIDEATATSDVQERR) is disordered. The segment at 27-65 (TATSDVQERREKLDADVDAILDEIDDVLEENAEEFVRSY) is ARC ATPase binding. Residues 30 to 59 (SDVQERREKLDADVDAILDEIDDVLEENAE) are a coiled coil. Glu-71 participates in a covalent cross-link: Isoglutamyl lysine isopeptide (Glu-Lys) (interchain with K-? in acceptor proteins).

The protein belongs to the prokaryotic ubiquitin-like protein family. As to quaternary structure, strongly interacts with the proteasome-associated ATPase ARC through a hydrophobic interface; the interacting region of Pup lies in its C-terminal half. There is one Pup binding site per ARC hexamer ring.

It functions in the pathway protein degradation; proteasomal Pup-dependent pathway. Protein modifier that is covalently attached to lysine residues of substrate proteins, thereby targeting them for proteasomal degradation. The tagging system is termed pupylation. In Acidothermus cellulolyticus (strain ATCC 43068 / DSM 8971 / 11B), this protein is Prokaryotic ubiquitin-like protein Pup.